Here is a 507-residue protein sequence, read N- to C-terminus: Sensor protein CseC (507 aa).

The tract at residues 1 to 42 (MRGFFRQRRSVSPPGHPYDRTGPGEHAGPGARTGPGGRPRVL) is disordered. A compositionally biased stretch (gly residues) spans 25–37 (EHAGPGARTGPGG). 2 consecutive transmembrane segments (helical) span residues 60-80 (LSAA…LVVH) and 183-203 (ALVI…VLIG). The HAMP domain maps to 204 to 260 (GQLSRRLREAAAAANRVASGEPDVRVRDAIGGVVRDETDDVARAVDAMADALQQRIE). Residues 268-470 (DIAHELRTPV…VAVLWLPEHA (203 aa)) enclose the Histidine kinase domain. At His271 the chain carries Phosphohistidine; by autocatalysis. Residues 472–507 (TNTGSYPMLPDRSKSGASSSARDMSREASQGMSRKP) are disordered. Positions 486-507 (SGASSSARDMSREASQGMSRKP) are enriched in polar residues.

Its subcellular location is the cell membrane. The catalysed reaction is ATP + protein L-histidine = ADP + protein N-phospho-L-histidine.. Functionally, member of the two-component regulatory system CseB/CseC involved in the stability of the cell envelope, through activation of transcription of RNA polymerase sigma-E factor. CseC functions as a membrane-associated protein kinase that phosphorylates CseB in response to changes in the cell envelope. The chain is Sensor protein CseC (cseC) from Streptomyces coelicolor (strain ATCC BAA-471 / A3(2) / M145).